The following is a 332-amino-acid chain: ATPase GET3 (332 aa).

K32–T39 provides a ligand contact to ATP. The active site involves D61. 2 residues coordinate ATP: E235 and N262. Residues C273 and C276 each contribute to the Zn(2+) site.

Belongs to the arsA ATPase family. In terms of assembly, homodimer.

It is found in the cytoplasm. It localises to the endoplasmic reticulum. Functionally, ATPase required for the post-translational delivery of tail-anchored (TA) proteins to the endoplasmic reticulum. Recognizes and selectively binds the transmembrane domain of TA proteins in the cytosol. This complex then targets to the endoplasmic reticulum by membrane-bound receptors, where the tail-anchored protein is released for insertion. This process is regulated by ATP binding and hydrolysis. ATP binding drives the homodimer towards the closed dimer state, facilitating recognition of newly synthesized TA membrane proteins. ATP hydrolysis is required for insertion. Subsequently, the homodimer reverts towards the open dimer state, lowering its affinity for the membrane-bound receptor, and returning it to the cytosol to initiate a new round of targeting. The protein is ATPase GET3 of Mycosarcoma maydis (Corn smut fungus).